The following is a 362-amino-acid chain: Nuclear hormone receptor family member nhr-77 (362 aa).

The nuclear receptor DNA-binding region spans 8 to 82 (DPICPVCEFP…AGMKRNLVKQ (75 aa)). 2 NR C4-type zinc fingers span residues 11–32 (CPVC…CGAC) and 48–69 (CEKN…FDYC). Residues 145 to 362 (EAEKDVSKIL…KLYIQLGLPF (218 aa)) enclose the NR LBD domain.

It belongs to the nuclear hormone receptor family.

The protein resides in the nucleus. Functionally, orphan nuclear receptor. This is Nuclear hormone receptor family member nhr-77 (nhr-77) from Caenorhabditis elegans.